A 635-amino-acid polypeptide reads, in one-letter code: Rab11 family-interacting protein 4 (635 aa).

The 36-residue stretch at 49-84 (GQGEEVEKLVKCLDPNDLGRINFKDFCRGVFAMKGC) folds into the EF-hand domain. Positions 62, 64, 68, and 73 each coordinate Ca(2+). Residues 82–635 (KGCEELLKDV…HNPSILEIKH (554 aa)) form a necessary for interaction with RAB11A, subcellular location, homo- or heterooligomerization region. Disordered stretches follow at residues 147–176 (GPQELDMDSPMESSQGPEGSVKGCGEEKEP) and 216–258 (EDYG…QTPR). Residues 216 to 225 (EDYGEGDDVD) show a composition bias toward acidic residues. Positions 279–615 (KINLLNDLEA…EEINFRLRQY (337 aa)) form a coiled coil. The region spanning 572 to 634 (EAKNLFATQT…DHNPSILEIK (63 aa)) is the FIP-RBD domain.

As to quaternary structure, homodimer. Forms a complex with Rab11 (RAB11A or RAB11B) and ARF6. Interacts with RAB11A; the interaction is direct. Forms a heterooligomeric complex with RAB11FIP2, RAB11FIP3 and RAB11FIP5. Interacts with ECPAS. Strongly expressed in the developing retina. Expressed predominantly in neural tissues.

It localises to the recycling endosome membrane. The protein resides in the cleavage furrow. It is found in the midbody. The protein localises to the cytoplasmic vesicle. In terms of biological role, acts as a regulator of endocytic traffic by participating in membrane delivery. Required for the abscission step in cytokinesis, possibly by acting as an 'address tag' delivering recycling endosome membranes to the cleavage furrow during late cytokinesis. May play a role in differentiation during retinal development, in a Rab11-independent manner. In Mus musculus (Mouse), this protein is Rab11 family-interacting protein 4 (Rab11fip4).